Consider the following 109-residue polypeptide: Large ribosomal subunit protein uL22 (109 aa).

This sequence belongs to the universal ribosomal protein uL22 family. As to quaternary structure, part of the 50S ribosomal subunit.

In terms of biological role, this protein binds specifically to 23S rRNA; its binding is stimulated by other ribosomal proteins, e.g. L4, L17, and L20. It is important during the early stages of 50S assembly. It makes multiple contacts with different domains of the 23S rRNA in the assembled 50S subunit and ribosome. The globular domain of the protein is located near the polypeptide exit tunnel on the outside of the subunit, while an extended beta-hairpin is found that lines the wall of the exit tunnel in the center of the 70S ribosome. The polypeptide is Large ribosomal subunit protein uL22 (Laribacter hongkongensis (strain HLHK9)).